Reading from the N-terminus, the 215-residue chain is Peptide methionine sulfoxide reductase MsrA (215 aa).

C58 is an active-site residue.

It belongs to the MsrA Met sulfoxide reductase family.

The enzyme catalyses L-methionyl-[protein] + [thioredoxin]-disulfide + H2O = L-methionyl-(S)-S-oxide-[protein] + [thioredoxin]-dithiol. It catalyses the reaction [thioredoxin]-disulfide + L-methionine + H2O = L-methionine (S)-S-oxide + [thioredoxin]-dithiol. Functionally, has an important function as a repair enzyme for proteins that have been inactivated by oxidation. Catalyzes the reversible oxidation-reduction of methionine sulfoxide in proteins to methionine. The sequence is that of Peptide methionine sulfoxide reductase MsrA from Pseudomonas syringae pv. tomato (strain ATCC BAA-871 / DC3000).